The chain runs to 163 residues: NADH-quinone oxidoreductase subunit I (163 aa).

4Fe-4S ferredoxin-type domains lie at 53–83 and 94–123; these read LRRYPNGEERCIACKLCEAICPAQAITIEAG and VRYDIDMVKCIYCGFCQEACPVDAIVEGPN. [4Fe-4S] cluster is bound by residues cysteine 63, cysteine 66, cysteine 69, cysteine 73, cysteine 103, cysteine 106, cysteine 109, and cysteine 113.

This sequence belongs to the complex I 23 kDa subunit family. As to quaternary structure, NDH-1 is composed of 14 different subunits. Subunits NuoA, H, J, K, L, M, N constitute the membrane sector of the complex. Requires [4Fe-4S] cluster as cofactor.

Its subcellular location is the cell inner membrane. It carries out the reaction a quinone + NADH + 5 H(+)(in) = a quinol + NAD(+) + 4 H(+)(out). Its function is as follows. NDH-1 shuttles electrons from NADH, via FMN and iron-sulfur (Fe-S) centers, to quinones in the respiratory chain. The immediate electron acceptor for the enzyme in this species is believed to be ubiquinone. Couples the redox reaction to proton translocation (for every two electrons transferred, four hydrogen ions are translocated across the cytoplasmic membrane), and thus conserves the redox energy in a proton gradient. The polypeptide is NADH-quinone oxidoreductase subunit I (Chelativorans sp. (strain BNC1)).